Here is a 114-residue protein sequence, read N- to C-terminus: Ribonuclease P protein component (114 aa).

Belongs to the RnpA family. Consists of a catalytic RNA component (M1 or rnpB) and a protein subunit.

The catalysed reaction is Endonucleolytic cleavage of RNA, removing 5'-extranucleotides from tRNA precursor.. In terms of biological role, RNaseP catalyzes the removal of the 5'-leader sequence from pre-tRNA to produce the mature 5'-terminus. It can also cleave other RNA substrates such as 4.5S RNA. The protein component plays an auxiliary but essential role in vivo by binding to the 5'-leader sequence and broadening the substrate specificity of the ribozyme. This chain is Ribonuclease P protein component, found in Alkaliphilus oremlandii (strain OhILAs) (Clostridium oremlandii (strain OhILAs)).